Consider the following 159-residue polypeptide: NADH-quinone oxidoreductase subunit I (159 aa).

2 4Fe-4S ferredoxin-type domains span residues 51–80 (RRYE…IEAD) and 90–119 (TRYD…EGPN). [4Fe-4S] cluster contacts are provided by cysteine 60, cysteine 63, cysteine 66, cysteine 70, cysteine 99, cysteine 102, cysteine 105, and cysteine 109.

The protein belongs to the complex I 23 kDa subunit family. As to quaternary structure, NDH-1 is composed of 14 different subunits. Subunits NuoA, H, J, K, L, M, N constitute the membrane sector of the complex. It depends on [4Fe-4S] cluster as a cofactor.

Its subcellular location is the cell inner membrane. It carries out the reaction a quinone + NADH + 5 H(+)(in) = a quinol + NAD(+) + 4 H(+)(out). NDH-1 shuttles electrons from NADH, via FMN and iron-sulfur (Fe-S) centers, to quinones in the respiratory chain. The immediate electron acceptor for the enzyme in this species is believed to be ubiquinone. Couples the redox reaction to proton translocation (for every two electrons transferred, four hydrogen ions are translocated across the cytoplasmic membrane), and thus conserves the redox energy in a proton gradient. The sequence is that of NADH-quinone oxidoreductase subunit I from Rickettsia bellii (strain OSU 85-389).